A 142-amino-acid polypeptide reads, in one-letter code: Large ribosomal subunit protein uL11 (142 aa).

This sequence belongs to the universal ribosomal protein uL11 family. As to quaternary structure, part of the ribosomal stalk of the 50S ribosomal subunit. Interacts with L10 and the large rRNA to form the base of the stalk. L10 forms an elongated spine to which L12 dimers bind in a sequential fashion forming a multimeric L10(L12)X complex. Post-translationally, one or more lysine residues are methylated.

Its function is as follows. Forms part of the ribosomal stalk which helps the ribosome interact with GTP-bound translation factors. This chain is Large ribosomal subunit protein uL11, found in Desulforudis audaxviator (strain MP104C).